The primary structure comprises 165 residues: Large ribosomal subunit protein uL10 (165 aa).

The protein belongs to the universal ribosomal protein uL10 family. As to quaternary structure, part of the ribosomal stalk of the 50S ribosomal subunit. The N-terminus interacts with L11 and the large rRNA to form the base of the stalk. The C-terminus forms an elongated spine to which L12 dimers bind in a sequential fashion forming a multimeric L10(L12)X complex.

Its function is as follows. Forms part of the ribosomal stalk, playing a central role in the interaction of the ribosome with GTP-bound translation factors. This chain is Large ribosomal subunit protein uL10, found in Pectobacterium atrosepticum (strain SCRI 1043 / ATCC BAA-672) (Erwinia carotovora subsp. atroseptica).